A 196-amino-acid polypeptide reads, in one-letter code: RNA-free ribonuclease P (196 aa).

It belongs to the HARP family.

It catalyses the reaction Endonucleolytic cleavage of RNA, removing 5'-extranucleotides from tRNA precursor.. Its function is as follows. RNA-free RNase P that catalyzes the removal of the 5'-leader sequence from pre-tRNA to produce the mature 5'-terminus. This is RNA-free ribonuclease P from Thermodesulfovibrio yellowstonii (strain ATCC 51303 / DSM 11347 / YP87).